The primary structure comprises 274 residues: Dermonecrotic toxin SdSicTox-betaIIB1bxii (274 aa).

The active site involves H5. The Mg(2+) site is built by E25 and D27. The active-site Nucleophile is H41. 2 cysteine pairs are disulfide-bonded: C45–C51 and C47–C190. D85 contacts Mg(2+).

Belongs to the arthropod phospholipase D family. Class II subfamily. It depends on Mg(2+) as a cofactor. Expressed by the venom gland.

It localises to the secreted. It carries out the reaction an N-(acyl)-sphingosylphosphocholine = an N-(acyl)-sphingosyl-1,3-cyclic phosphate + choline. It catalyses the reaction an N-(acyl)-sphingosylphosphoethanolamine = an N-(acyl)-sphingosyl-1,3-cyclic phosphate + ethanolamine. The enzyme catalyses a 1-acyl-sn-glycero-3-phosphocholine = a 1-acyl-sn-glycero-2,3-cyclic phosphate + choline. The catalysed reaction is a 1-acyl-sn-glycero-3-phosphoethanolamine = a 1-acyl-sn-glycero-2,3-cyclic phosphate + ethanolamine. Dermonecrotic toxins cleave the phosphodiester linkage between the phosphate and headgroup of certain phospholipids (sphingolipid and lysolipid substrates), forming an alcohol (often choline) and a cyclic phosphate. This toxin acts on sphingomyelin (SM). It may also act on ceramide phosphoethanolamine (CPE), lysophosphatidylcholine (LPC) and lysophosphatidylethanolamine (LPE), but not on lysophosphatidylserine (LPS), and lysophosphatidylglycerol (LPG). It acts by transphosphatidylation, releasing exclusively cyclic phosphate products as second products. Induces dermonecrosis, hemolysis, increased vascular permeability, edema, inflammatory response, and platelet aggregation. The protein is Dermonecrotic toxin SdSicTox-betaIIB1bxii of Sicarius cf. damarensis (strain GJB-2008) (Six-eyed sand spider).